Reading from the N-terminus, the 571-residue chain is Zinc finger protein 181 (571 aa).

In terms of domain architecture, KRAB spans 4 to 76 (VTFNDVAIDF…EKKLSKGMIP (73 aa)). Residues K109 and K126 each participate in a glycyl lysine isopeptide (Lys-Gly) (interchain with G-Cter in SUMO2) cross-link. C2H2-type zinc fingers lie at residues 237 to 259 (YTCS…WRIH), 265 to 287 (YECR…LISH), 293 to 315 (YKCI…QSTH), 321 to 343 (YECM…LRIH), 349 to 371 (YECR…QKIH), 377 to 399 (YECR…QRIH), 405 to 427 (YECN…QSIH), 433 to 455 (FECQ…LRNH), 461 to 483 (YECS…HRIH), 489 to 511 (YECI…QRIH), and 517 to 539 (YKCN…QRVH).

Belongs to the krueppel C2H2-type zinc-finger protein family.

It is found in the nucleus. Functionally, may be involved in transcriptional regulation. The polypeptide is Zinc finger protein 181 (ZNF181) (Homo sapiens (Human)).